The following is a 236-amino-acid chain: 2-C-methyl-D-erythritol 4-phosphate cytidylyltransferase (236 aa).

Belongs to the IspD/TarI cytidylyltransferase family. IspD subfamily.

The enzyme catalyses 2-C-methyl-D-erythritol 4-phosphate + CTP + H(+) = 4-CDP-2-C-methyl-D-erythritol + diphosphate. Its pathway is isoprenoid biosynthesis; isopentenyl diphosphate biosynthesis via DXP pathway; isopentenyl diphosphate from 1-deoxy-D-xylulose 5-phosphate: step 2/6. Catalyzes the formation of 4-diphosphocytidyl-2-C-methyl-D-erythritol from CTP and 2-C-methyl-D-erythritol 4-phosphate (MEP). The polypeptide is 2-C-methyl-D-erythritol 4-phosphate cytidylyltransferase (Alkaliphilus oremlandii (strain OhILAs) (Clostridium oremlandii (strain OhILAs))).